The primary structure comprises 361 residues: MKNRIHNFNAGPAALPLPVLEEIQAELLDFKGSGMSIMEVSHRSKWFDDVINETVERINRLMGLGDDFQVLFMQGGASTQFALVPMNLLPEGQSADYVNTGTWSTKAIKEAQAMGKTVNVAASSEDRNFCYIPKDIPLDPNAAYVHITSNNTIKGTAYTDFPDAGNVPLIADMSSDILSRPIDASKFGLIYAGAQKNMGPAGVCVAIIRKDMLERVPASLPSMFKYTTFADKNSMYNTPPCFAIYTVGLVVKWIEETIGGLEKMEARNRKKADTLYSIFDSSDFYSGTADKDSRSLMNVTFRLPSEDLEKAFVAQALENGLGGLKGHRSVGGCRASIYNPTSQEGIEALVDFMKEFEKKNG.

Residue Arg-43 participates in L-glutamate binding. Pyridoxal 5'-phosphate is bound by residues 77 to 78, Trp-103, Thr-152, Asp-172, and Gln-195; that span reads AS. Position 196 is an N6-(pyridoxal phosphate)lysine (Lys-196). A pyridoxal 5'-phosphate-binding site is contributed by 237–238; sequence NT.

Belongs to the class-V pyridoxal-phosphate-dependent aminotransferase family. SerC subfamily. In terms of assembly, homodimer. Pyridoxal 5'-phosphate serves as cofactor.

It localises to the cytoplasm. It catalyses the reaction O-phospho-L-serine + 2-oxoglutarate = 3-phosphooxypyruvate + L-glutamate. The enzyme catalyses 4-(phosphooxy)-L-threonine + 2-oxoglutarate = (R)-3-hydroxy-2-oxo-4-phosphooxybutanoate + L-glutamate. It functions in the pathway amino-acid biosynthesis; L-serine biosynthesis; L-serine from 3-phospho-D-glycerate: step 2/3. It participates in cofactor biosynthesis; pyridoxine 5'-phosphate biosynthesis; pyridoxine 5'-phosphate from D-erythrose 4-phosphate: step 3/5. In terms of biological role, catalyzes the reversible conversion of 3-phosphohydroxypyruvate to phosphoserine and of 3-hydroxy-2-oxo-4-phosphonooxybutanoate to phosphohydroxythreonine. This chain is Phosphoserine aminotransferase, found in Desulfatibacillum aliphaticivorans.